Consider the following 372-residue polypeptide: 4-hydroxy-3-methylbut-2-en-1-yl diphosphate synthase (flavodoxin) (372 aa).

Residues cysteine 270, cysteine 273, cysteine 305, and glutamate 312 each contribute to the [4Fe-4S] cluster site.

It belongs to the IspG family. The cofactor is [4Fe-4S] cluster.

It catalyses the reaction (2E)-4-hydroxy-3-methylbut-2-enyl diphosphate + oxidized [flavodoxin] + H2O + 2 H(+) = 2-C-methyl-D-erythritol 2,4-cyclic diphosphate + reduced [flavodoxin]. It participates in isoprenoid biosynthesis; isopentenyl diphosphate biosynthesis via DXP pathway; isopentenyl diphosphate from 1-deoxy-D-xylulose 5-phosphate: step 5/6. In terms of biological role, converts 2C-methyl-D-erythritol 2,4-cyclodiphosphate (ME-2,4cPP) into 1-hydroxy-2-methyl-2-(E)-butenyl 4-diphosphate. The chain is 4-hydroxy-3-methylbut-2-en-1-yl diphosphate synthase (flavodoxin) from Enterobacter sp. (strain 638).